A 235-amino-acid chain; its full sequence is UPF0758 protein A1S_2918 (235 aa).

The interval 1–20 is disordered; it reads MNTSIKNWPEQERPRERLLQ. Positions 9-18 are enriched in basic and acidic residues; that stretch reads PEQERPRERL. Residues 105-227 form the MPN domain; that stretch reads SLHSSHLVLD…SFSFAEQQLL (123 aa). Zn(2+) is bound by residues H176, H178, and D189. The JAMM motif signature appears at 176-189; it reads HNHPFGSPQPSPED.

This sequence belongs to the UPF0758 family.

The chain is UPF0758 protein A1S_2918 from Acinetobacter baumannii (strain ATCC 17978 / DSM 105126 / CIP 53.77 / LMG 1025 / NCDC KC755 / 5377).